A 405-amino-acid chain; its full sequence is Replication factor C large subunit (405 aa).

Residue 47–54 (GPPGVGKT) coordinates ATP.

It belongs to the activator 1 small subunits family. RfcL subfamily. As to quaternary structure, heteromultimer composed of small subunits (RfcS) and large subunits (RfcL).

Part of the RFC clamp loader complex which loads the PCNA sliding clamp onto DNA. In Saccharolobus islandicus (strain L.S.2.15 / Lassen #1) (Sulfolobus islandicus), this protein is Replication factor C large subunit.